The chain runs to 744 residues: Adenosylcobalamin-dependent ribonucleoside-triphosphate reductase (744 aa).

An intrachain disulfide couples cysteine 120 to cysteine 424. The effector region-1 stretch occupies residues 148–159; the sequence is SMPFSFLFDQLM. The tract at residues 169-318 is effector region-2; that stretch reads VDENINQIPK…ICNLIGKTVV (150 aa). Catalysis depends on residues cysteine 413 and glutamate 415. Positions 570–631 are adenosylcobalamin-binding-1; sequence FHYSGYLIQR…SDNFASAGTV (62 aa). Positions 690-729 are adenosylcobalamin-binding-2; the sequence is LKQAPKEPISKEKYEKADNHITGNVEIVFEQTNEDQKGLE.

This sequence belongs to the class II ribonucleoside-triphosphate reductase family. As to quaternary structure, monomer. The cofactor is adenosylcob(III)alamin.

The enzyme catalyses a 2'-deoxyribonucleoside 5'-triphosphate + [thioredoxin]-disulfide + H2O = a ribonucleoside 5'-triphosphate + [thioredoxin]-dithiol. With respect to regulation, allosterically regulated by ATP and dNTP. The polypeptide is Adenosylcobalamin-dependent ribonucleoside-triphosphate reductase (rtpR) (Lactobacillus gasseri (strain ATCC 33323 / DSM 20243 / BCRC 14619 / CIP 102991 / JCM 1131 / KCTC 3163 / NCIMB 11718 / NCTC 13722 / AM63)).